Consider the following 141-residue polypeptide: Large ribosomal subunit protein uL11A (141 aa).

This sequence belongs to the universal ribosomal protein uL11 family. In terms of assembly, part of the ribosomal stalk of the 50S ribosomal subunit. Interacts with L10 and the large rRNA to form the base of the stalk. L10 forms an elongated spine to which L12 dimers bind in a sequential fashion forming a multimeric L10(L12)X complex. In terms of processing, one or more lysine residues are methylated.

Forms part of the ribosomal stalk which helps the ribosome interact with GTP-bound translation factors. This Halalkalibacterium halodurans (strain ATCC BAA-125 / DSM 18197 / FERM 7344 / JCM 9153 / C-125) (Bacillus halodurans) protein is Large ribosomal subunit protein uL11A.